The primary structure comprises 134 residues: ATP synthase epsilon chain, chloroplastic (134 aa).

It belongs to the ATPase epsilon chain family. F-type ATPases have 2 components, CF(1) - the catalytic core - and CF(0) - the membrane proton channel. CF(1) has five subunits: alpha(3), beta(3), gamma(1), delta(1), epsilon(1). CF(0) has three main subunits: a, b and c.

The protein localises to the plastid. It is found in the chloroplast thylakoid membrane. Its function is as follows. Produces ATP from ADP in the presence of a proton gradient across the membrane. This Chlorella vulgaris (Green alga) protein is ATP synthase epsilon chain, chloroplastic.